The sequence spans 238 residues: Cysteine-rich venom protein natrin-2 (238 aa).

The first 19 residues, 1–19 (MIAFIVLLSLAAVLQQSSG), serve as a signal peptide directing secretion. In terms of domain architecture, SCP spans 38-164 (VDKHNALRRS…SSKYLYVCQY (127 aa)). 8 disulfide bridges follow: Cys75-Cys153, Cys92-Cys165, Cys148-Cys162, Cys184-Cys191, Cys187-Cys196, Cys200-Cys233, Cys209-Cys227, and Cys218-Cys231. A ShKT domain is found at 200-233 (CKHHNVFSNCQSLAKQNACQTEWMKSKCAASCFC).

Expressed by the venom gland.

The protein resides in the secreted. Functionally, inhibits carbachol-induced muscle contraction and weakly blocks muscle contraction evoked by potassium. The protein is Cysteine-rich venom protein natrin-2 of Naja atra (Chinese cobra).